Reading from the N-terminus, the 310-residue chain is Ribose-phosphate pyrophosphokinase (310 aa).

ATP-binding positions include 34–36 (DME) and 93–94 (RQ). Residues His-127 and Asp-167 each coordinate Mg(2+). Lys-190 is an active-site residue. D-ribose 5-phosphate-binding positions include Arg-192, Asp-216, and 220–224 (DSGGT).

It belongs to the ribose-phosphate pyrophosphokinase family. Class I subfamily. In terms of assembly, homohexamer. Mg(2+) serves as cofactor.

It is found in the cytoplasm. It catalyses the reaction D-ribose 5-phosphate + ATP = 5-phospho-alpha-D-ribose 1-diphosphate + AMP + H(+). The protein operates within metabolic intermediate biosynthesis; 5-phospho-alpha-D-ribose 1-diphosphate biosynthesis; 5-phospho-alpha-D-ribose 1-diphosphate from D-ribose 5-phosphate (route I): step 1/1. Involved in the biosynthesis of the central metabolite phospho-alpha-D-ribosyl-1-pyrophosphate (PRPP) via the transfer of pyrophosphoryl group from ATP to 1-hydroxyl of ribose-5-phosphate (Rib-5-P). The sequence is that of Ribose-phosphate pyrophosphokinase from Granulibacter bethesdensis (strain ATCC BAA-1260 / CGDNIH1).